A 381-amino-acid chain; its full sequence is MRGFVVLLAVFALSQASGIVRIPLHKGKSLRRALKERGLLEDFLKNHQHAVSRKHSNSREVASEFLTNYLDCQYFGKIYIGTPPQEFTVVFDTGSSDLWVPSVYCNSVACQNHHRFDPSKSSTFQNMDKSLSIQYGTGSMQGLLGYDTVTVSSIVDPHQTVGLSTQEPGDVFTYSEFDGILGLAYPSLASEYSVPVFDNMMDRHLVAQDLFSVYMSRNEQGSMLTLGAIDPSYYTGSLHWIPVTVQEYWQFTVDSVTVDGVVVACDGGCQAILDTGTSMLVGPGSDIFNIQQAIGATEGQYGEFDIDCGTLSSMPTVVFEINGKKYPLPPSAYTNQDQGFCTSGFQGDDSSQQWILGDVFIREYYSVFDRASNLVGLAKAI.

The first 16 residues, 1–16 (MRGFVVLLAVFALSQA), serve as a signal peptide directing secretion. The propeptide at 17 to 58 (SGIVRIPLHKGKSLRRALKERGLLEDFLKNHQHAVSRKHSNS) is activation peptide. The region spanning 74–378 (YFGKIYIGTP…DRASNLVGLA (305 aa)) is the Peptidase A1 domain. Residue D92 is part of the active site. Copy 1 of the repeat occupies 92-102 (DTGSSDLWVPS). Intrachain disulfides connect C105/C110 and C265/C269. D274 is a catalytic residue. The stretch at 274-284 (DTGTSMLVGPG) is repeat 2. C308 and C341 are oxidised to a cystine.

Belongs to the peptidase A1 family. Monomer.

The catalysed reaction is Broad specificity similar to that of pepsin A. Clots milk by cleavage of a single 104-Ser-Phe-|-Met-Ala-107 bond in kappa-chain of casein.. With respect to regulation, inhibited by pepstatin. Its function is as follows. Hydrolyzes a variety of proteins. The chain is Chymosin (CYM) from Callithrix jacchus (White-tufted-ear marmoset).